Consider the following 523-residue polypeptide: MPSVMEKPSAGSGILSRSRAKTAPNGGQPHSEDDSSEEEHSHDSMIRVGTNYQAVIPECKPESPARYSNKELKGMLVWSPNHCVSDAKLDKYIAMAKEKHGYNIEQALGMLLWHKHDVEKSLADLANFTPFPDEWTVEDKVLFEQAFGFHGKCFQRIQQMLPDKVIPSLVKYYYSWKKTRSRTSVMDRQARRLGGRKDKEDSDELEEGRGAVSEGEPDTGDPKREPLPSRPLNARPGPGKKEVQISQYRHHPLRTRRRPPKGMYLSPEGLTAVSGSPDLANLTLRGLDSQLISLKRQVQSMKQTNSSLRQALEGGIDPLRPPEANTKFNSRWTTDEQLLAVQAIRRYGKDFGAIAEVIGNKTLTQVKTFFVSYRRRFNLEEVLQEWEAEQDGAPAAPVPTEEARRGAPVPATALEEDDEVQITSVSTSVPRSVPPAPPPPPPPTSLSQPPPLLRPPLPTAPTLLRQPPPLQQGRFLQPRLAPNQPPPPLIRPALAASRHSARPGPQPPPTLVGAPLEPPAPSL.

Residues 1–43 are disordered; that stretch reads MPSVMEKPSAGSGILSRSRAKTAPNGGQPHSEDDSSEEEHSHD. The segment covering 30 to 43 has biased composition (basic and acidic residues); that stretch reads HSEDDSSEEEHSHD. Residues serine 31, serine 35, serine 36, and serine 63 each carry the phosphoserine modification. The 86-residue stretch at 44-129 folds into the ELM2 domain; it reads SMIRVGTNYQ…KSLADLANFT (86 aa). A Glycyl lysine isopeptide (Lys-Gly) (interchain with G-Cter in SUMO2) cross-link involves residue lysine 88. Positions 130-181 constitute an SANT 1 domain; sequence PFPDEWTVEDKVLFEQAFGFHGKCFQRIQQMLPDKVIPSLVKYYYSWKKTRS. The interval 185-244 is disordered; the sequence is VMDRQARRLGGRKDKEDSDELEEGRGAVSEGEPDTGDPKREPLPSRPLNARPGPGKKEVQ. The residue at position 202 (serine 202) is a Phosphoserine. Residues 283–314 are a coiled coil; it reads TLRGLDSQLISLKRQVQSMKQTNSSLRQALEG. The region spanning 327–378 is the SANT 2 domain; the sequence is KFNSRWTTDEQLLAVQAIRRYGKDFGAIAEVIGNKTLTQVKTFFVSYRRRFN. Residues 387–523 are disordered; sequence EAEQDGAPAA…APLEPPAPSL (137 aa). Positions 432–459 are enriched in pro residues; sequence SVPPAPPPPPPPTSLSQPPPLLRPPLPT. The span at 460–482 shows a compositional bias: low complexity; that stretch reads APTLLRQPPPLQQGRFLQPRLAP. Arginine 479 bears the Asymmetric dimethylarginine mark. Positions 504–523 are enriched in pro residues; it reads GPQPPPTLVGAPLEPPAPSL.

It belongs to the CoREST family. In terms of tissue distribution, predominantly, but not exclusively, expressed in neural tissue. Strongly expressed in neural domains of the developing brain of the developing mouse CNS.

The protein resides in the nucleus. Functionally, may act as a component of a corepressor complex that represses transcription. The polypeptide is REST corepressor 2 (Rcor2) (Mus musculus (Mouse)).